A 659-amino-acid polypeptide reads, in one-letter code: Endoglucanase A (659 aa).

Residues 1 to 500 (MLIFETYLIL…SKLPNFPPKE (500 aa)) are catalytic. The active-site Nucleophile is D101. The interval 413–433 (NSPKHPHHRTAHGSWSNQLTN) is disordered. Active-site residues include H419, D457, and E466. A CBM3 domain is found at 501–658 (QVEDEFFVEA…GVLVFGTLPD (158 aa)).

It belongs to the glycosyl hydrolase 9 (cellulase E) family.

It localises to the secreted. It carries out the reaction Endohydrolysis of (1-&gt;4)-beta-D-glucosidic linkages in cellulose, lichenin and cereal beta-D-glucans.. Its activity is regulated as follows. Strongly inhibited by ZnCl(2) and by EDTA. Its function is as follows. Active on carboxymethyl cellulose and carboxymethyl cellulose-RBB but not avicel, xanthan gum, carboxymethyl-curdulan-RBB or carboxymethyl-xylan-RBB. This is Endoglucanase A (eglA) from Bacillus pumilus (Bacillus mesentericus).